Consider the following 329-residue polypeptide: Synaptonemal complex central element protein 1 (329 aa).

Residues 1–33 (MATRPQPLSVEPEGSADLLHGPEGARGRRGSTQ) are disordered. Coiled-coil stretches lie at residues 28–168 (RRGS…ETLM) and 194–294 (KEQL…ILAQ). A disordered region spans residues 295 to 329 (IQSTQKEEDSSWRTASPKPLEAHKETVQERPSSRT). Positions 314 to 329 (LEAHKETVQERPSSRT) are enriched in basic and acidic residues.

It belongs to the SYCE family. As to quaternary structure, homodimer. Found in a complex with SYCP1 and SYCE2. Interacts with SYCP1, SYCE2 and SYCE3. Interacts with SIX6OS1.

The protein resides in the nucleus. The protein localises to the chromosome. Major component of the transverse central element of synaptonemal complexes (SCS), formed between homologous chromosomes during meiotic prophase. Requires SYCP1 in order to be incorporated into the central element. May have a role in the synaptonemal complex assembly, stabilization and recombination. This chain is Synaptonemal complex central element protein 1 (Syce1), found in Rattus norvegicus (Rat).